The sequence spans 573 residues: Lauric acid 10-hydroxylase (573 aa).

Transmembrane regions (helical) follow at residues 3–23 and 298–318; these read YVNILLGLFFTWFLVNGLMSL and LFPTPFLPFIIICPFLYLLIF. Cys516 contributes to the heme binding site.

The protein belongs to the cytochrome P450 family. The cofactor is heme. Mostly expressed in flowers and leaves and, at low levels, in roots and stems.

It is found in the endoplasmic reticulum membrane. It catalyses the reaction an omega-methyl-medium-chain fatty acid + reduced [NADPH--hemoprotein reductase] + O2 = an omega-hydroxy-medium-chain fatty acid + oxidized [NADPH--hemoprotein reductase] + H2O + H(+). The catalysed reaction is decanoate + reduced [NADPH--hemoprotein reductase] + O2 = 10-hydroxydecanoate + oxidized [NADPH--hemoprotein reductase] + H2O + H(+). It carries out the reaction dodecanoate + reduced [NADPH--hemoprotein reductase] + O2 = 12-hydroxydodecanoate + oxidized [NADPH--hemoprotein reductase] + H2O + H(+). It participates in lipid metabolism; fatty acid metabolism. Its function is as follows. Cytochrome P450 hydroxylase catalyzing the conversion of decanoate (capric acid) and dodecanoate (lauric acid) to their corresponding omega-hydroxy metabolites, 10-hydroxydecanoate and 12-hydroxydodecanoate, respectively; these hydroxylated components affect plant growth, including reducing root elongation. The chain is Lauric acid 10-hydroxylase from Petunia hybrida (Petunia).